We begin with the raw amino-acid sequence, 128 residues long: Histone H2A (128 aa).

The interval M1 to A22 is disordered. Residue S2 is modified to N-acetylserine. S2 carries the post-translational modification Phosphoserine. An N6-(2-hydroxyisobutyryl)lysine modification is found at K6. K6 carries the N6-acetyllysine modification. The segment covering T7–S19 has biased composition (basic residues). Residue K10 is modified to N6-(2-hydroxyisobutyryl)lysine; alternate. Residue K10 is modified to N6-lactoyllysine; alternate. The residue at position 10 (K10) is an N6-succinyllysine. Glycyl lysine isopeptide (Lys-Gly) (interchain with G-Cter in ubiquitin) cross-links involve residues K14 and K16. K37 is subject to N6-(2-hydroxyisobutyryl)lysine; alternate. 2 positions are modified to N6-(2-hydroxyisobutyryl)lysine: K75 and K76. K96 carries the N6-(2-hydroxyisobutyryl)lysine; alternate modification. K96 bears the N6-succinyllysine mark. N6-glutaryllysine; alternate is present on K96. Q105 carries the post-translational modification N5-methylglutamine. K119 is subject to N6-(2-hydroxyisobutyryl)lysine; alternate. An N6-glutaryllysine; alternate mark is found at K119, K120, and K126. Residue K120 forms a Glycyl lysine isopeptide (Lys-Gly) (interchain with G-Cter in ubiquitin) linkage.

As to quaternary structure, the nucleosome is a histone octamer containing two molecules each of H2A, H2B, H3 and H4 assembled in one H3-H4 heterotetramer and two H2A-H2B heterodimers. The octamer wraps approximately 147 bp of DNA. Monoubiquitination of Lys-120 (H2AK119Ub) gives a specific tag for epigenetic transcriptional repression. Following DNA double-strand breaks (DSBs), it is ubiquitinated through 'Lys-63' linkage of ubiquitin moieties, leading to the recruitment of repair proteins to sites of DNA damage. H2AK119Ub and ionizing radiation-induced 'Lys-63'-linked ubiquitination are distinct events. In terms of processing, phosphorylation on Ser-2 is enhanced during mitosis. Phosphorylation on Ser-2 directly represses transcription. Post-translationally, glutamine methylation at Gln-105 (H2AQ104me) by FBL is specifically dedicated to polymerase I. It is present at 35S ribosomal DNA locus and impairs binding of the FACT complex. As to expression, expressed and secreted by skin epithelium.

Its subcellular location is the nucleus. It is found in the chromosome. Functionally, core component of nucleosome. Nucleosomes wrap and compact DNA into chromatin, limiting DNA accessibility to the cellular machineries which require DNA as a template. Histones thereby play a central role in transcription regulation, DNA repair, DNA replication and chromosomal stability. DNA accessibility is regulated via a complex set of post-translational modifications of histones, also called histone code, and nucleosome remodeling. In terms of biological role, the secreted form has antibacterial activity against Gram-positive bacteria and antifungal activity against S.cerevisiae. The polypeptide is Histone H2A (Oncorhynchus mykiss (Rainbow trout)).